Here is a 996-residue protein sequence, read N- to C-terminus: Leucine-rich repeat receptor-like kinase protein THICK TASSEL DWARF1 (996 aa).

Positions 1-26 (MPPPTFLLGLLLLLLLAAAAPAPASA) are cleaved as a signal peptide. LRR repeat units follow at residues 78–103 (TSRV…VALL), 104–127 (DALA…LASM), 128–151 (PALR…PPAA), 153–178 (FPAL…APHA), 180–201 (SLRY…TFGD), 202–226 (LAAL…LSRL), 251–275 (LQSL…LARL), 276–299 (SRLD…LGAL), 300–323 (TSLR…FAAL), 325–349 (NLKL…DFPF), 351–371 (EVLQ…LGRN), 372–395 (GRLK…LCAG), 397–419 (NLQL…LGDC), 420–443 (KTLT…LFDL), 445–466 (QANM…VIAG), 467–490 (DKIG…IGNL), 491–514 (PALQ…IGRL), 516–538 (NLTR…LMGC), 539–562 (ASLG…VTSL), 563–586 (KILC…MANM), and 587–611 (TSLT…QFLV). A helical transmembrane segment spans residues 646–666 (KKLLVWLVVLLTLLVLAVLGA). Positions 703 to 978 (LKEDNIIGKG…TMREVVHMLS (276 aa)) constitute a Protein kinase domain. Residues 709–717 (IGKGGAGIV) and Lys-731 each bind ATP. The Proton acceptor role is filled by Asp-828.

This sequence belongs to the protein kinase superfamily. Ser/Thr protein kinase family. In terms of tissue distribution, highly expressed in the apex of the vegetative seedlings. Lower expression in young leaves, ears and tassels, embryos and roots. Not expressed in the shoot meristem itself. Detected in the three outermost layers of the inflorescence meristem, and on its flanks at positions of prospective spikelet pair meristems. Not confined to meristematic cells but also detected in primordia of glumes, lemmas and stamens.

It is found in the membrane. It carries out the reaction L-seryl-[protein] + ATP = O-phospho-L-seryl-[protein] + ADP + H(+). The catalysed reaction is L-threonyl-[protein] + ATP = O-phospho-L-threonyl-[protein] + ADP + H(+). In terms of biological role, receptor-like kinase protein that regulates meristem size during inflorescence and flower development. Promotes vegetative meristem growth and restricts inflorescence and floral meristem growth. Based on additive and synergistic phenotypes of double mutants, it is probable that unlike CLV1 and CLV2 in A.thaliana, TD1 and FAE2 do not function exclusively in a single pathway. However, KN-1 and TD1 do function in a linear pathway to maintain vegetative meristem homeostasis, but they may interact with different partners during development. In Zea mays (Maize), this protein is Leucine-rich repeat receptor-like kinase protein THICK TASSEL DWARF1 (TD1).